We begin with the raw amino-acid sequence, 211 residues long: Glycerol-3-phosphate acyltransferase (211 aa).

Helical transmembrane passes span 10-30 (FTTWLIFLISYLIGSIPFGLL), 63-83 (ALTLLCDILKGTLVILVIKFL), 90-110 (NIFISLAGFFAFLGHLFPVWL), 126-146 (LGLYWPAAIVFITAWIVLFLI), and 152-172 (LSALIAVIITPIFVHFSYPYL).

The protein belongs to the PlsY family. As to quaternary structure, probably interacts with PlsX.

The protein resides in the cell inner membrane. The catalysed reaction is an acyl phosphate + sn-glycerol 3-phosphate = a 1-acyl-sn-glycero-3-phosphate + phosphate. It functions in the pathway lipid metabolism; phospholipid metabolism. In terms of biological role, catalyzes the transfer of an acyl group from acyl-phosphate (acyl-PO(4)) to glycerol-3-phosphate (G3P) to form lysophosphatidic acid (LPA). This enzyme utilizes acyl-phosphate as fatty acyl donor, but not acyl-CoA or acyl-ACP. The chain is Glycerol-3-phosphate acyltransferase from Bartonella henselae (strain ATCC 49882 / DSM 28221 / CCUG 30454 / Houston 1) (Rochalimaea henselae).